The chain runs to 287 residues: 4-hydroxybenzoate octaprenyltransferase (287 aa).

7 helical membrane passes run alanine 30–glycine 50, isoleucine 92–leucine 112, phenylalanine 133–phenylalanine 153, aspartate 158–tyrosine 178, valine 207–alanine 227, tryptophan 232–isoleucine 252, and histidine 266–valine 286.

It belongs to the UbiA prenyltransferase family. Mg(2+) serves as cofactor.

The protein resides in the cell inner membrane. The catalysed reaction is all-trans-octaprenyl diphosphate + 4-hydroxybenzoate = 4-hydroxy-3-(all-trans-octaprenyl)benzoate + diphosphate. The protein operates within cofactor biosynthesis; ubiquinone biosynthesis. Catalyzes the prenylation of para-hydroxybenzoate (PHB) with an all-trans polyprenyl group. Mediates the second step in the final reaction sequence of ubiquinone-8 (UQ-8) biosynthesis, which is the condensation of the polyisoprenoid side chain with PHB, generating the first membrane-bound Q intermediate 3-octaprenyl-4-hydroxybenzoate. The protein is 4-hydroxybenzoate octaprenyltransferase of Burkholderia mallei (strain NCTC 10247).